The following is a 301-amino-acid chain: Homeobox protein Hox-D13 (301 aa).

Disordered regions lie at residues 1–20 (MDGLRGDSSGGGGGGGTPGQ) and 55–75 (GERSGAAARPDPPAKDCPGSG). Positions 8–18 (SSGGGGGGGTP) are enriched in gly residues. Positions 234–293 (GRKKRVPYTKLQLKELENEYAINKFINKDKRRRISAATNLSERQVTIWFQNRRVKDKKIV) form a DNA-binding region, homeobox.

The protein belongs to the Abd-B homeobox family.

It is found in the nucleus. Its function is as follows. Sequence-specific transcription factor that binds gene promoters and activates their transcription. Part of a developmental regulatory system that provides cells with specific positional identities on the anterior-posterior axis. In Gallus gallus (Chicken), this protein is Homeobox protein Hox-D13 (HOXD13).